We begin with the raw amino-acid sequence, 212 residues long: ER lumen protein-retaining receptor 1 (212 aa).

At 1 to 4 (MNLF) the chain is on the lumenal side. A helical membrane pass occupies residues 5 to 24 (RFLGDLSHLLAIILLLLKIW). The Cytoplasmic segment spans residues 25–32 (KSRSCAGI). Residues 33 to 52 (SGKSQVLFAVVFTARYLDLF) form a helical membrane-spanning segment. Positions 47-48 (RY) are interaction with the K-D-E-L motif on target proteins. Residues 53 to 58 (TNYISL) are Lumenal-facing. A helical membrane pass occupies residues 59–79 (YNTCMKVVYIACSFTTVWMIY). Over 80–92 (SKFKATYDGNHDT) the chain is Cytoplasmic. The chain crosses the membrane as a helical span at residues 93 to 110 (FRVEFLVVPTAVLAFLVN). The Lumenal segment spans residues 111-116 (HDFTPL). A helical transmembrane segment spans residues 117–135 (EILWTFSIYLESVAILPQL). The Cytoplasmic portion of the chain corresponds to 136 to 149 (FMVSKTGEAETITS). A helical membrane pass occupies residues 150 to 168 (HYLFALGVYRTLYLFNWIW). Residues 159 to 169 (RTLYLFNWIWR) are interaction with the K-D-E-L motif on target proteins. Over 169-178 (RYHFEGFFDL) the chain is Lumenal. The helical transmembrane segment at 179-199 (IAIVAGLVQTVLYCDFFYLYI) threads the bilayer. Topologically, residues 200–212 (TKVLKGKKLSLPA) are cytoplasmic. Positions 204-207 (KGKK) are important for recycling of cargo proteins with the sequence motif K-D-E-L from the Golgi to the endoplasmic reticulum. Ser-209 carries the phosphoserine; by PKA modification.

This sequence belongs to the ERD2 family. As to quaternary structure, upon ligand binding the receptor oligomerizes and interacts with components of the transport machinery such as ARFGAP1 and ARF1. In terms of processing, phosphorylation by PKA at Ser-209 is required for endoplasmic reticulum retention function.

The protein localises to the golgi apparatus membrane. It localises to the cytoplasmic vesicle. It is found in the COPI-coated vesicle membrane. Its subcellular location is the endoplasmic reticulum membrane. The protein resides in the endoplasmic reticulum-Golgi intermediate compartment membrane. Its function is as follows. Receptor for the C-terminal sequence motif K-D-E-L that is present on endoplasmic reticulum resident proteins and that mediates their recycling from the Golgi back to the endoplasmic reticulum. The polypeptide is ER lumen protein-retaining receptor 1 (Kdelr1) (Rattus norvegicus (Rat)).